We begin with the raw amino-acid sequence, 306 residues long: ORF-B protein (306 aa).

The next 3 membrane-spanning stretches (helical) occupy residues 92 to 112 (MIQWDYVFYLLPRVWIMFPFI), 120 to 140 (LTHLLTLTTSVLSATSLVFGW), and 161 to 181 (VIEWLAQFSFLFTHVTLIVVS).

Interacts with host RACK1.

Its subcellular location is the host cytoplasm. The protein resides in the host cell membrane. The sequence is that of ORF-B protein from Sander vitreus (Walleye).